Here is a 289-residue protein sequence, read N- to C-terminus: Rhodopsin (289 aa).

Topologically, residues 1–7 are extracellular; it reads YLVSPAA. Residues 8-32 form a helical membrane-spanning segment; that stretch reads YAALGAYMFLLILIGFPVNFLTLYV. Topologically, residues 33-44 are cytoplasmic; it reads TLEHKKLRTPLN. The helical transmembrane segment at 45–67 threads the bilayer; the sequence is YILLNLAVADLFMVLGGFTTTMY. Over 68-81 the chain is Extracellular; it reads TSMHGYFVLGRLGC. C81 and C158 are joined by a disulfide. Residues 82–104 traverse the membrane as a helical segment; the sequence is NLEGFFATLGGEIALWSLVVLAI. The 'Ionic lock' involved in activated form stabilization signature appears at 105–107; sequence ERW. At 105–123 the chain is on the cytoplasmic side; that stretch reads ERWIVVCKPISKFRFTEDN. The chain crosses the membrane as a helical span at residues 124-144; sequence AIMGLAFSWVMALACAVPPLV. At 145–173 the chain is on the extracellular side; it reads GWLRYIPEGMQCTCGVDYYTRAEGFDNES. N171 carries N-linked (GlcNAc...) asparagine glycosylation. A helical membrane pass occupies residues 174 to 195; the sequence is FVIYMFIVHFLIPLSVIFFCYG. The Cytoplasmic segment spans residues 196–223; that stretch reads RLLCAVKEAAAAQQESETTQRAEKEVSR. A helical transmembrane segment spans residues 224–245; the sequence is MVVIMVIGFLVCWLPYASVAWW. The Extracellular segment spans residues 246 to 257; it reads IFCNQGSDFGPI. Residues 258-279 traverse the membrane as a helical segment; sequence FMTLPSFFAKRPAIYNPMIYIC. N6-(retinylidene)lysine is present on K267. Residues 280 to 289 are Cytoplasmic-facing; sequence MNKQFRHCMI.

The protein belongs to the G-protein coupled receptor 1 family. Opsin subfamily. Post-translationally, phosphorylated on some or all of the serine and threonine residues present in the C-terminal region. In terms of processing, contains one covalently linked retinal chromophore.

The protein resides in the membrane. The protein localises to the cell projection. Its subcellular location is the cilium. It localises to the photoreceptor outer segment. In terms of biological role, photoreceptor required for image-forming vision at low light intensity. While most salt water fish species use retinal as chromophore, most freshwater fish use 3-dehydroretinal, or a mixture of retinal and 3-dehydroretinal. Light-induced isomerization of 11-cis to all-trans retinal triggers a conformational change that activates signaling via G-proteins. Subsequent receptor phosphorylation mediates displacement of the bound G-protein alpha subunit by arrestin and terminates signaling. In Batrachocottus nikolskii (Fat sculpin), this protein is Rhodopsin (rho).